Here is a 690-residue protein sequence, read N- to C-terminus: MSANRTVTVFSSSAEDQEPIELAEDSLQNLDKMLAEEKEEHQLLKDEVVLLRKENVEAKTYSTLLEIMLDEAEEKASSAQETTSEENNLKILNRDLVAENLELKEMKEELRKIWLSDSKKFQEALTRISDENTKLQKDCHELESIRQCAQFALDNCNEELEKTQTENEEHESRIETLEREVCEKDIAMKDIVERKDEISLQLELQTKEFTSALNDLMYGREDTLKQIHQMKENWKVKQNEFEVEITKLKSQNDYFDSERLQLTDRIRALLNELSDVRLELGSTRLAMKEKAEVTEAVTSFNKDLRDKLEDEIARLGECLQFRKDEHEQDEAVIAHLEEQLKLGSDKAAAFSSEHSDTIELLRESETELMELRMENYDLKEDFKILKEEKEDVNRTCECLREQLSTTIQERDIEKGQMQSEMDAKMVAVHQQYAKQIDNMKYNHMLAINQELIKGQMALESGKKKHANEILTVRNELEQSNAAHQSLRDQCSLLLSSEDDLRTAHLALESKMTLVSEECIALRVSRANAQKEIGNLTEHHKLEVALLEDAKSGIQQRLHYATIEIEQLKKINEVTQAQFKKETDEKNAEINEFQAAMVSMKQQYNVLGNHCRVLTSQGISDRTTIDKLQETIREHTELAIETKRIHDAEIVQLNDAHKKLVDNLGVEELDEEPKASTESEEKAEWEMVDEE.

4 coiled-coil regions span residues 20 to 181, 359 to 409, 458 to 494, and 560 to 643; these read IELA…EREV, ELLR…TIQE, LESG…SLLL, and ATIE…ETKR. Positions 61–64 match the LIR 1 motif; the sequence is YSTL. Residues 381-385 are required for interaction with lgg-1; the sequence is DFKIL. The tract at residues 666–690 is disordered; the sequence is EELDEEPKASTESEEKAEWEMVDEE. The span at 671 to 684 shows a compositional bias: basic and acidic residues; sequence EPKASTESEEKAEW. Positions 684–687 match the LIR 2 motif; sequence WEMV.

Interacts with sepa-1. Interacts (via the LIR motifs) with lgg-1 and lgg-2. Shows strong interaction with lgg-1 and weak interaction with lgg-2.

The protein localises to the cytoplasm. Functionally, involved in autophagy. Thought to act as an adapter protein that brings PGL granules to autophagic structures containing lgg-1. Association with other adapters such as sepa-1 is required for the accumulation and degradation of germ cell specific P-granules by autophagy in somatic cells. This ensures exclusive localization of the P-granules in germ cells. May also play a role in the removal of sepa-1 from somatic cells. The protein is Ectopic P granules protein 2 of Caenorhabditis elegans.